We begin with the raw amino-acid sequence, 383 residues long: Protein delta homolog 2 (383 aa).

Positions 1–26 (MPSGCRCLHLVCLLCILAAPVKPVRA) are cleaved as a signal peptide. EGF-like domains are found at residues 27-58 (DDCS…LHCE), 62-89 (RMPG…KFCD), 91-129 (DEHV…RDCE), and 131-172 (KEGP…AHCE). Over 27-306 (DDCSSHCDLA…RQEAGLGKSS (280 aa)) the chain is Extracellular. Cystine bridges form between Cys-29–Cys-40, Cys-33–Cys-46, Cys-48–Cys-57, Cys-66–Cys-71, Cys-79–Cys-88, Cys-95–Cys-107, Cys-101–Cys-117, Cys-119–Cys-128, Cys-135–Cys-148, Cys-142–Cys-160, Cys-162–Cys-171, Cys-178–Cys-189, Cys-183–Cys-198, Cys-200–Cys-209, Cys-216–Cys-227, Cys-221–Cys-236, and Cys-238–Cys-247. An N-linked (GlcNAc...) asparagine glycan is attached at Asn-157. One can recognise an EGF-like 5; calcium-binding domain in the interval 174–210 (NVDDCLMRPCANGATCLDGINRFSCLCPEGFAGRFCT). The 37-residue stretch at 212-248 (NLDDCASRPCQRGARCRDRVHDFDCLCPSGYGGKTCE) folds into the EGF-like 6; calcium-binding domain. A helical transmembrane segment spans residues 307–327 (LVAVVVFGAVTATLVLSTVLL). Residues 328 to 383 (TLRAWRRGVCPPGPCCYPAPHYAPARQDQECQVSMLPAGLPLPPDLPPEPGKTTAL) are Cytoplasmic-facing.

It is found in the membrane. Functionally, regulates adipogenesis. This chain is Protein delta homolog 2 (DLK2), found in Sus scrofa (Pig).